The sequence spans 231 residues: Probable septum site-determining protein MinC (231 aa).

Residues 101 to 125 are disordered; sequence GKEKAPRPAPTPQAPAQNTTPVTKT. Residues 114–123 are compositionally biased toward low complexity; that stretch reads APAQNTTPVT.

Belongs to the MinC family. In terms of assembly, interacts with MinD and FtsZ.

Its function is as follows. Cell division inhibitor that blocks the formation of polar Z ring septums. Rapidly oscillates between the poles of the cell to destabilize FtsZ filaments that have formed before they mature into polar Z rings. Prevents FtsZ polymerization. The polypeptide is Probable septum site-determining protein MinC (Escherichia coli (strain ATCC 8739 / DSM 1576 / NBRC 3972 / NCIMB 8545 / WDCM 00012 / Crooks)).